The following is a 688-amino-acid chain: Glycine--tRNA ligase beta subunit (688 aa).

Belongs to the class-II aminoacyl-tRNA synthetase family. As to quaternary structure, tetramer of two alpha and two beta subunits.

It localises to the cytoplasm. The catalysed reaction is tRNA(Gly) + glycine + ATP = glycyl-tRNA(Gly) + AMP + diphosphate. This chain is Glycine--tRNA ligase beta subunit, found in Actinobacillus pleuropneumoniae serotype 7 (strain AP76).